The primary structure comprises 409 residues: Putative actin-fragmin kinase DDB_G0268812 (409 aa).

A disordered region spans residues 1-45 (MKTFRDFKKKIKNNNNNKNNKNNNINNNNSNNNKNNKNNNNNNSN). A coiled-coil region spans residues 5–46 (RDFKKKIKNNNNNKNNKNNNINNNNSNNNKNNKNNNNNNSNN). Over residues 13-45 (NNNNNKNNKNNNINNNNSNNNKNNKNNNNNNSN) the composition is skewed to low complexity.

This sequence belongs to the protein kinase superfamily. AFK Ser/Thr protein kinase family.

The chain is Putative actin-fragmin kinase DDB_G0268812 from Dictyostelium discoideum (Social amoeba).